A 44-amino-acid polypeptide reads, in one-letter code: Defensin-like peptide (44 aa).

3 disulfide bridges follow: C7–C32, C18–C40, and C22–C42.

As to expression, hemolymph.

The protein localises to the secreted. Has antibacterial activity against the Gram-positive bacterium S.lutea (MIC=1.9 uM). Lacks antibacterial activity against the Gram-positive bacteria L.monocytogenes and M.luteus, and the Gram-negative bacteria E.coli D31, E.coli ATCC 25922, and S.typhimurium. Has antifungal activity against A.niger (MIC=2.9 uM), C.albicans (MIC=2.9 uM), C.fructus (MIC=2.9 uM), C.wickerhamii (MIC=2.9 uM), P.pastoris (MIC=2.9 uM), P.stiptis (MIC=2.9 uM), P.tannophilus (MIC=2.9 uM), T.harzianum (MIC=2.9 uM), and Z.marxianus (MIC=2.9 uM), but lacks antifungal activity against C.albidus, F.oxysporum, and S.cerevisiae. This Galleria mellonella (Greater wax moth) protein is Defensin-like peptide.